A 342-amino-acid polypeptide reads, in one-letter code: Endo-1,4-beta-xylanase A (342 aa).

The GH10 domain occupies 11–342; that stretch reads EMLNLSLAKT…KEALYRILRF (332 aa). Residue glutamate 144 is the Proton donor of the active site. The active-site Nucleophile is glutamate 252.

This sequence belongs to the glycosyl hydrolase 10 (cellulase F) family. Cytoplasmic xylanase subfamily.

It localises to the cytoplasm. The catalysed reaction is Endohydrolysis of (1-&gt;4)-beta-D-xylosidic linkages in xylans.. It functions in the pathway glycan degradation; xylan degradation. This is Endo-1,4-beta-xylanase A (xynA) from Caldicellulosiruptor saccharolyticus (Caldocellum saccharolyticum).